The following is a 424-amino-acid chain: Serine--tRNA ligase (424 aa).

Position 231-233 (231-233 (TAE)) interacts with L-serine. 262 to 264 (RSE) contacts ATP. Residue Glu-285 coordinates L-serine. 349 to 352 (EISS) is a binding site for ATP. Ser-385 is an L-serine binding site.

Belongs to the class-II aminoacyl-tRNA synthetase family. Type-1 seryl-tRNA synthetase subfamily. Homodimer. The tRNA molecule binds across the dimer.

The protein localises to the cytoplasm. It catalyses the reaction tRNA(Ser) + L-serine + ATP = L-seryl-tRNA(Ser) + AMP + diphosphate + H(+). The enzyme catalyses tRNA(Sec) + L-serine + ATP = L-seryl-tRNA(Sec) + AMP + diphosphate + H(+). It functions in the pathway aminoacyl-tRNA biosynthesis; selenocysteinyl-tRNA(Sec) biosynthesis; L-seryl-tRNA(Sec) from L-serine and tRNA(Sec): step 1/1. In terms of biological role, catalyzes the attachment of serine to tRNA(Ser). Is also able to aminoacylate tRNA(Sec) with serine, to form the misacylated tRNA L-seryl-tRNA(Sec), which will be further converted into selenocysteinyl-tRNA(Sec). The polypeptide is Serine--tRNA ligase (Bacillus anthracis (strain A0248)).